We begin with the raw amino-acid sequence, 392 residues long: Heat-inducible transcription repressor HrcA (392 aa).

Belongs to the HrcA family.

In terms of biological role, negative regulator of class I heat shock genes (grpE-dnaK-dnaJ and groELS operons). Prevents heat-shock induction of these operons. The polypeptide is Heat-inducible transcription repressor HrcA (Chlamydia trachomatis serovar D (strain ATCC VR-885 / DSM 19411 / UW-3/Cx)).